Consider the following 236-residue polypeptide: MLAEGRQVYLPPPPPSKLPRLSGTDPTDGVVTMAAPSPLVLGLGLGLGGSGSDSSGSDAEASAATVREARPPSALTFMQRQELEQQVLIYRYFAAGAPVPVHLVLPIWKSIAAASSFGPQSFPSLTGLGSLCFDYRSSMEPEPGRCRRTDGKKWRCSRDVVPGHKYCERHVHRGRGRSRKPMEASAAVAPTYLPVRPALHTVATLATSAPSLSHLGFSSASKVLLAHTTTGTTRAT.

The segment at 1-27 is disordered; that stretch reads MLAEGRQVYLPPPPPSKLPRLSGTDPT. In terms of domain architecture, QLQ spans 74–109; sequence ALTFMQRQELEQQVLIYRYFAAGAPVPVHLVLPIWK. The WRC domain occupies 140–184; it reads EPEPGRCRRTDGKKWRCSRDVVPGHKYCERHVHRGRGRSRKPMEA. Short sequence motifs (bipartite nuclear localization signal) lie at residues 145–155 and 173–180; these read RCRRTDGKKWR and RGRGRSRK.

The protein belongs to the GRF family.

It localises to the nucleus. In terms of biological role, transcription activator that plays a regulatory role in gibberellin-induced stem elongation. This is Growth-regulating factor 12 (GRF12) from Oryza sativa subsp. japonica (Rice).